A 140-amino-acid chain; its full sequence is MTIQYTFSMIKPDAIKRNKIGQVNTYLENAGLKIVAQKMKFLTKYEAECFYDEHRARPFFNSLVEYITSGAVVLQVLKGEDAIILNRTIMGATNPAEAEAGTIRKDLGESIEANSIHGSDSENSAKREIEFFFNKSEIIE.

Residues K11, F59, R87, T93, R104, and N114 each coordinate ATP. Residue H117 is the Pros-phosphohistidine intermediate of the active site.

This sequence belongs to the NDK family. In terms of assembly, homotetramer. Requires Mg(2+) as cofactor.

It localises to the cytoplasm. It catalyses the reaction a 2'-deoxyribonucleoside 5'-diphosphate + ATP = a 2'-deoxyribonucleoside 5'-triphosphate + ADP. The enzyme catalyses a ribonucleoside 5'-diphosphate + ATP = a ribonucleoside 5'-triphosphate + ADP. In terms of biological role, major role in the synthesis of nucleoside triphosphates other than ATP. The ATP gamma phosphate is transferred to the NDP beta phosphate via a ping-pong mechanism, using a phosphorylated active-site intermediate. In Rickettsia felis (strain ATCC VR-1525 / URRWXCal2) (Rickettsia azadi), this protein is Nucleoside diphosphate kinase.